Reading from the N-terminus, the 367-residue chain is Cytochrome b (367 aa).

The next 4 helical transmembrane spans lie at 20-40 (MGSILGMILGLQLLTGILLSM), 64-85 (WFLRLLHANGASLFFLFMYAHI), 101-121 (WMVGVTIFLVSMATAFLGYVL), and 166-186 (FFSLHFLLPFLISGLALLHII). Residues His-70 and His-84 each coordinate heme b. His-170 and His-184 together coordinate heme b. Position 189 (His-189) interacts with a ubiquinone. A run of 4 helical transmembrane segments spans residues 214-234 (IKDSVGFLMVFGVLLMITFFS), 276-296 (LGGVVALLMSILILYFLPLSS), 308-328 (IYQVLFWILVVTFIILTWLGA), and 335-355 (YLSLAGPLTLLYFLMFLLLGM).

It belongs to the cytochrome b family. In terms of assembly, the main subunits of complex b-c1 are: cytochrome b, cytochrome c1 and the Rieske protein. Requires heme b as cofactor.

The protein resides in the mitochondrion inner membrane. Component of the ubiquinol-cytochrome c reductase complex (complex III or cytochrome b-c1 complex) that is part of the mitochondrial respiratory chain. The b-c1 complex mediates electron transfer from ubiquinol to cytochrome c. Contributes to the generation of a proton gradient across the mitochondrial membrane that is then used for ATP synthesis. The sequence is that of Cytochrome b (MT-CYB) from Albinaria caerulea (Land snail).